Here is a 120-residue protein sequence, read N- to C-terminus: Crustacean hyperglycemic hormones 4 (120 aa).

Residues 1–26 (MVALNTLSAVSAALLVLAASPSPASA) form the signal peptide. 3 disulfide bridges follow: Cys53–Cys89, Cys69–Cys85, and Cys72–Cys98. Val118 carries the valine amide modification.

It belongs to the arthropod CHH/MIH/GIH/VIH hormone family.

It is found in the secreted. Hormone found in the sinus gland of isopods and decapods which controls the blood sugar level. Has a secretagogue action over the amylase released from the midgut gland. May act as a stress hormone and may be involved in the control of molting and reproduction. The polypeptide is Crustacean hyperglycemic hormones 4 (CHH4) (Penaeus monodon (Giant tiger prawn)).